The chain runs to 748 residues: Transducin-like enhancer protein 4 (748 aa).

Disordered stretches follow at residues 1–20 (MIRD…PHQP) and 157–332 (LPIK…DPLA). A q domain region spans residues 1-112 (MIRDLSKMYR…SQEQQQLQAQ (112 aa)). Residues 113–179 (HLLTWTWSAC…HQRDRDSIKS (67 aa)) are GP domain. Residues 158–177 (PIKDEKKHHDNDHQRDRDSI) are compositionally biased toward basic and acidic residues. The segment covering 178 to 189 (KSSSVSPSASFR) has biased composition (low complexity). The interval 180–249 (SSVSPSASFR…SPRGSPAHSP (70 aa)) is ccN domain. Phosphoserine occurs at positions 183, 187, 191, and 197. Residues 190 to 227 (GSEKHRNSTDYSSESKKQKTEEKEIAARYDSDGEKSDD) show a composition bias toward basic and acidic residues. N6-acetyllysine is present on Lys212. At Ser220 the chain carries Phosphoserine. Phosphoserine; by CK2 is present on Ser225. Ser240 is subject to Phosphoserine; by CDK1. Phosphoserine is present on residues Ser244 and Ser248. Residues 248–264 (SPRENGLDKTRLLKKDA) are compositionally biased toward basic and acidic residues. The segment at 250 to 427 (RENGLDKTRL…PGGKPAYSFH (178 aa)) is SP domain. Lys256 carries the N6-acetyllysine modification. The span at 265 to 280 (PISPASVASSSSTPSS) shows a compositional bias: low complexity. A Phosphoserine modification is found at Ser267. A compositionally biased stretch (polar residues) spans 292-303 (TTPVSKSNTPTP). Thr293 bears the Phosphothreonine mark. Ser296 and Ser298 each carry phosphoserine. Phosphothreonine occurs at positions 300, 302, 309, and 315. A Phosphoserine modification is found at Ser394. 7 WD repeats span residues 460-498 (NHGE…NKSP), 506-545 (NRDN…PRIK), 550-589 (SSAP…LVRQ), 592-631 (GHTD…QLQQ), 633-672 (DFTS…KYQL), 674-713 (LHES…SIFQ), and 715-748 (KESS…EVIY).

It belongs to the WD repeat Groucho/TLE family. In terms of assembly, homooligomer and heterooligomer with other family members. Binds PAX5, LEF1, TCF7, TCF7L1 and TCF7L2. Interacts with ZNF703; TLE4 may mediate ZNF703 transcriptional repression. Interacts with SIX3 and SIX6. Interacts with PAX2. Post-translationally, phosphorylated. PAX5 binding increases phosphorylation. In terms of processing, ubiquitinated by XIAP/BIRC4.

It localises to the nucleus. In terms of biological role, transcriptional corepressor that binds to a number of transcription factors. Inhibits the transcriptional activation mediated by PAX5, and by CTNNB1 and TCF family members in Wnt signaling. The effects of full-length TLE family members may be modulated by association with dominant-negative AES. Essential for the transcriptional repressor activity of SIX3 during retina and lens development and for SIX3 transcriptional auto-repression. Involved in transcriptional repression of GNRHR and enhances MSX1-mediated transcriptional repression of CGA/alpha-GSU. This chain is Transducin-like enhancer protein 4 (Tle4), found in Rattus norvegicus (Rat).